The sequence spans 737 residues: 1,4-alpha-glucan branching enzyme GlgB (737 aa).

Aspartate 399 acts as the Nucleophile in catalysis. Glutamate 452 serves as the catalytic Proton donor.

Belongs to the glycosyl hydrolase 13 family. GlgB subfamily. As to quaternary structure, monomer.

It carries out the reaction Transfers a segment of a (1-&gt;4)-alpha-D-glucan chain to a primary hydroxy group in a similar glucan chain.. The protein operates within glycan biosynthesis; glycogen biosynthesis. Its function is as follows. Catalyzes the formation of the alpha-1,6-glucosidic linkages in glycogen by scission of a 1,4-alpha-linked oligosaccharide from growing alpha-1,4-glucan chains and the subsequent attachment of the oligosaccharide to the alpha-1,6 position. The protein is 1,4-alpha-glucan branching enzyme GlgB of Chlamydia muridarum (strain MoPn / Nigg).